The primary structure comprises 368 residues: 3-dehydroquinate synthase (368 aa).

NAD(+)-binding positions include 112–116 (GVVGD), 136–137 (TT), lysine 149, lysine 158, and 176–179 (FLDT). Residues glutamate 191, histidine 257, and histidine 274 each contribute to the Zn(2+) site.

It belongs to the sugar phosphate cyclases superfamily. Dehydroquinate synthase family. Co(2+) serves as cofactor. Requires Zn(2+) as cofactor. NAD(+) is required as a cofactor.

It localises to the cytoplasm. The catalysed reaction is 7-phospho-2-dehydro-3-deoxy-D-arabino-heptonate = 3-dehydroquinate + phosphate. The protein operates within metabolic intermediate biosynthesis; chorismate biosynthesis; chorismate from D-erythrose 4-phosphate and phosphoenolpyruvate: step 2/7. Catalyzes the conversion of 3-deoxy-D-arabino-heptulosonate 7-phosphate (DAHP) to dehydroquinate (DHQ). The protein is 3-dehydroquinate synthase of Natranaerobius thermophilus (strain ATCC BAA-1301 / DSM 18059 / JW/NM-WN-LF).